The following is a 115-amino-acid chain: V-type proton ATPase subunit G (115 aa).

It belongs to the V-ATPase G subunit family. As to quaternary structure, V-ATPase is a heteromultimeric enzyme composed of a peripheral catalytic V1 complex (components A to H) attached to an integral membrane V0 proton pore complex (components: a, c, c', c'', d, e, f and VOA1).

Its subcellular location is the vacuole membrane. Functionally, subunit of the V1 complex of vacuolar(H+)-ATPase (V-ATPase), a multisubunit enzyme composed of a peripheral complex (V1) that hydrolyzes ATP and a membrane integral complex (V0) that translocates protons. V-ATPase is responsible for acidifying and maintaining the pH of intracellular compartments. The polypeptide is V-type proton ATPase subunit G (vma-10) (Neurospora crassa (strain ATCC 24698 / 74-OR23-1A / CBS 708.71 / DSM 1257 / FGSC 987)).